The following is a 199-amino-acid chain: Small ribosomal subunit protein uS4 (199 aa).

The S4 RNA-binding domain maps to 91-154; it reads SRLDNVVYRL…KDLIIVKEAL (64 aa).

This sequence belongs to the universal ribosomal protein uS4 family. In terms of assembly, part of the 30S ribosomal subunit. Contacts protein S5. The interaction surface between S4 and S5 is involved in control of translational fidelity.

In terms of biological role, one of the primary rRNA binding proteins, it binds directly to 16S rRNA where it nucleates assembly of the body of the 30S subunit. With S5 and S12 plays an important role in translational accuracy. This is Small ribosomal subunit protein uS4 from Phytoplasma mali (strain AT).